Here is a 310-residue protein sequence, read N- to C-terminus: tRNA uridine(34) hydroxylase (310 aa).

Positions 124–218 (SDPEVLLIDT…YFEEVPQEES (95 aa)) constitute a Rhodanese domain. Residue Cys-178 is the Cysteine persulfide intermediate of the active site.

It belongs to the TrhO family.

It carries out the reaction uridine(34) in tRNA + AH2 + O2 = 5-hydroxyuridine(34) in tRNA + A + H2O. Functionally, catalyzes oxygen-dependent 5-hydroxyuridine (ho5U) modification at position 34 in tRNAs. This Pseudomonas putida (strain ATCC 700007 / DSM 6899 / JCM 31910 / BCRC 17059 / LMG 24140 / F1) protein is tRNA uridine(34) hydroxylase.